A 557-amino-acid chain; its full sequence is Tripeptidyl-peptidase 1 (557 aa).

The first 16 residues, 1–16, serve as a signal peptide directing secretion; it reads MRVAVFVLSFIWLVNG. The propeptide at 17 to 190 is removed in mature form; sequence ELLEADQDAV…WEGARQAILG (174 aa). The N-linked (GlcNAc...) asparagine glycan is linked to asparagine 53. Residues cysteine 107 and cysteine 118 are joined by a disulfide bond. Residues 194–557 form the Peptidase S53 domain; it reads GVTPAVIRNR…YPVFLASLMD (364 aa). Residues asparagine 205 and asparagine 216 are each glycosylated (N-linked (GlcNAc...) asparagine). Residues glutamate 266 and aspartate 270 each act as charge relay system in the active site. 3 N-linked (GlcNAc...) asparagine glycosylation sites follow: asparagine 280, asparagine 307, and asparagine 438. 2 cysteine pairs are disulfide-bonded: cysteine 359–cysteine 521 and cysteine 517–cysteine 532. The active-site Charge relay system is the serine 470. Ca(2+) contacts are provided by aspartate 512 and valine 513. Ca(2+) is bound at residue aspartate 538.

It depends on Ca(2+) as a cofactor. Activated by autocatalytic proteolytical processing.

It localises to the lysosome. The enzyme catalyses Release of an N-terminal tripeptide from a polypeptide, but also has endopeptidase activity.. In terms of biological role, lysosomal serine protease with tripeptidyl-peptidase I activity. May act as a non-specific lysosomal peptidase which generates tripeptides from the breakdown products produced by lysosomal proteinases. Requires substrates with an unsubstituted N-terminus. This is Tripeptidyl-peptidase 1 from Danio rerio (Zebrafish).